A 47-amino-acid chain; its full sequence is Ruminococcin-A (47 aa).

The first 23 residues, 1-23 (MRNDVLTLTNPMEEKELEQILGG), serve as a signal peptide directing secretion. A 2,3-didehydrobutyrine mark is found at threonine 30 and threonine 39. Positions 30–35 (TISHEC) form a cross-link, beta-methyllanthionine (Thr-Cys). Residues 32–46 (SHECNMNTWQFLFTC) constitute a cross-link (lanthionine (Ser-Cys)). The segment at residues 45–47 (TCC) is a cross-link (beta-methyllanthionine (Thr-Cys)).

In terms of processing, maturation of lantibiotics involves the enzymatic conversion of Thr, and Ser into dehydrated AA and the formation of thioether bonds with cysteine. This is followed by membrane translocation and cleavage of the modified precursor. It is not established whether the 2,3-didehydrobutyrine is the E- or Z-isomer.

The protein localises to the secreted. Its function is as follows. Lanthionine-containing peptide antibiotic (lantibiotic) active on Gram-positive bacteria. The bactericidal activity of lantibiotics is based on depolarization of energized bacterial cytoplasmic membranes, initiated by the formation of aqueous transmembrane pores. Ruminococcin A is a broad spectrum bacteriocin exhibiting activity against a wide range of pathogenic clostridia and B.longum. This is Ruminococcin-A (rumA1) from Mediterraneibacter gnavus (Ruminococcus gnavus).